Here is a 294-residue protein sequence, read N- to C-terminus: UPF0282 protein APE_0500.1 (294 aa).

This sequence belongs to the UPF0282 family.

In Aeropyrum pernix (strain ATCC 700893 / DSM 11879 / JCM 9820 / NBRC 100138 / K1), this protein is UPF0282 protein APE_0500.1.